A 361-amino-acid polypeptide reads, in one-letter code: MKNLFLFCRAGFEKECAAEIQQRAGELNVGGFVKANNNDAYVVYQCFEDDAADTLVKQLPLDSLIFARQMFAASDLLVDLPENDRISPIVAALSDVSKAGEVRVETPDTNEAKELSAFCRKFTVPLRQHLKKSGSLLAQENPKRPIIHVCFIGPGRAYVGYSYSNNSSPHFMGIPRLKMAADAPSRSSLKLDEAFGQFVPKEEQEERIRSGMNAVDLGACPGGWTYQLVRRGMFVSAVDNGPMDEKLMETGQVKHYREDGFRFEPQRKNIYWLVCDMVEKPARVAELIEAWAINGWFKEAIFNLKLPMKSRYKEVTAILETMQTILKENGVTDFKVQCKHLYHDRDEVTVHLWLRPNTAWN.

S-adenosyl-L-methionine is bound by residues Ser-187, 220–223 (CPGG), Asp-239, Asp-259, and Asp-276. Catalysis depends on Lys-305, which acts as the Proton acceptor.

The protein belongs to the class I-like SAM-binding methyltransferase superfamily. RNA methyltransferase RlmE family. RlmM subfamily. In terms of assembly, monomer.

It localises to the cytoplasm. It catalyses the reaction cytidine(2498) in 23S rRNA + S-adenosyl-L-methionine = 2'-O-methylcytidine(2498) in 23S rRNA + S-adenosyl-L-homocysteine + H(+). Its function is as follows. Catalyzes the 2'-O-methylation at nucleotide C2498 in 23S rRNA. This Shewanella sp. (strain W3-18-1) protein is Ribosomal RNA large subunit methyltransferase M.